A 241-amino-acid chain; its full sequence is Polyol phosphate phosphatase PYP1 (241 aa).

Asp-9 acts as the Nucleophile in catalysis. Positions 9, 11, and 179 each coordinate Mg(2+). Catalysis depends on Asp-11, which acts as the Proton donor.

The protein belongs to the HAD-like hydrolase superfamily. Mg(2+) is required as a cofactor.

Its subcellular location is the cytoplasm. It is found in the nucleus. It catalyses the reaction D-ribitol 5-phosphate + H2O = ribitol + phosphate. It carries out the reaction D-sorbitol 6-phosphate + H2O = D-sorbitol + phosphate. The catalysed reaction is sn-glycerol 1-phosphate + H2O = glycerol + phosphate. The enzyme catalyses D-erythrose 4-phosphate + H2O = D-erythrose + phosphate. In terms of biological role, hydrolyzes sugar alcohol (polyol) phosphates. Dephosphorylates a variety of substrates, including: sn-glycerol 1-phosphate (D-glycerol 3-phosphate), D-ribitol 5-phosphate, D-sorbitol 6-phosphate (D-glucitol 6-phosphate), and D-erythrose 4-phosphate. Prevents accumulation of toxic levels of polyol phosphates, which can impair glycolysis by inhibiting glucose-6-phosphate isomerase. The chain is Polyol phosphate phosphatase PYP1 from Saccharomyces cerevisiae (strain ATCC 204508 / S288c) (Baker's yeast).